Consider the following 963-residue polypeptide: VPS35 endosomal protein-sorting factor-like (963 aa).

Residues 43–112 (SKTKKVSRKG…DKDENSFVGP (70 aa)) are disordered. The segment covering 51-72 (KGSTSSTSSSSSSSVIDPLSSV) has biased composition (low complexity). S265 is subject to Phosphoserine. A helical membrane pass occupies residues 699–719 (AFVRACVAYCFITIPSLVGIF).

This sequence belongs to the VPS35L family. In terms of assembly, component of the heterotrimeric retriever complex formed by VPS26C, VPS29 and VPS35L. Interacts with VPS29. Interacts with COMMD1, CCDC93 and CCDC22; associates with the CCC (COMMD/CCDC22/CCDC93) complex which contains at least COMMD1 (and possibly other COMM domain-containing proteins), CCDC22 and CCDC93. Interacts with WASHC1, WASHC2A and WASHC2C. Interacts with SNX17 and SNX31.

The protein localises to the membrane. Its subcellular location is the endosome. Functionally, acts as a component of the retriever complex. The retriever complex is a heterotrimeric complex related to retromer cargo-selective complex (CSC) and essential for retromer-independent retrieval and recycling of numerous cargos such as integrin alpha-5/beta-1 (ITGA5:ITGB1). The recruitment of the retriever complex to the endosomal membrane involves CCC and WASH complexes. In the endosomes, drives the retrieval and recycling of NxxY-motif-containing cargo proteins by coupling to SNX17, a cargo essential for the homeostatic maintenance of numerous cell surface proteins associated with processes that include cell migration, cell adhesion, nutrient supply and cell signaling. Involved in copper-dependent ATP7A trafficking between the trans-Golgi network and vesicles in the cell periphery; the function is proposed to depend on its association with the CCC complex and cooperation with the WASH complex on early endosomes. Seems not to be required for CCC complex stability. In Mus musculus (Mouse), this protein is VPS35 endosomal protein-sorting factor-like.